Here is a 247-residue protein sequence, read N- to C-terminus: tRNA pseudouridine synthase A 1 (247 aa).

The Nucleophile role is filled by aspartate 53. A substrate-binding site is contributed by tyrosine 111.

Belongs to the tRNA pseudouridine synthase TruA family. As to quaternary structure, homodimer.

The enzyme catalyses uridine(38/39/40) in tRNA = pseudouridine(38/39/40) in tRNA. In terms of biological role, formation of pseudouridine at positions 38, 39 and 40 in the anticodon stem and loop of transfer RNAs. The chain is tRNA pseudouridine synthase A 1 from Bacillus cereus (strain ZK / E33L).